A 156-amino-acid polypeptide reads, in one-letter code: Small ribosomal subunit protein uS7 (156 aa).

This sequence belongs to the universal ribosomal protein uS7 family. As to quaternary structure, part of the 30S ribosomal subunit. Contacts proteins S9 and S11.

One of the primary rRNA binding proteins, it binds directly to 16S rRNA where it nucleates assembly of the head domain of the 30S subunit. Is located at the subunit interface close to the decoding center, probably blocks exit of the E-site tRNA. This is Small ribosomal subunit protein uS7 from Paramagnetospirillum magneticum (strain ATCC 700264 / AMB-1) (Magnetospirillum magneticum).